We begin with the raw amino-acid sequence, 425 residues long: Enolase (425 aa).

Glutamine 163 serves as a coordination point for (2R)-2-phosphoglycerate. Residue glutamate 205 is the Proton donor of the active site. Residues aspartate 242, glutamate 285, and aspartate 312 each contribute to the Mg(2+) site. Lysine 337, arginine 366, serine 367, and lysine 388 together coordinate (2R)-2-phosphoglycerate. Lysine 337 (proton acceptor) is an active-site residue.

Belongs to the enolase family. It depends on Mg(2+) as a cofactor.

The protein localises to the cytoplasm. It localises to the secreted. It is found in the cell surface. The enzyme catalyses (2R)-2-phosphoglycerate = phosphoenolpyruvate + H2O. Its pathway is carbohydrate degradation; glycolysis; pyruvate from D-glyceraldehyde 3-phosphate: step 4/5. Catalyzes the reversible conversion of 2-phosphoglycerate (2-PG) into phosphoenolpyruvate (PEP). It is essential for the degradation of carbohydrates via glycolysis. The protein is Enolase of Granulibacter bethesdensis (strain ATCC BAA-1260 / CGDNIH1).